A 442-amino-acid polypeptide reads, in one-letter code: Exodeoxyribonuclease 7 large subunit (442 aa).

The disordered stretch occupies residues 1-38 (MSDSTQFSLFDSGDDEPAKVTAPKRKVARKKRSSSSSD). Over residues 22–33 (APKRKVARKKRS) the composition is skewed to basic residues.

The protein belongs to the XseA family. In terms of assembly, heterooligomer composed of large and small subunits.

It localises to the cytoplasm. The catalysed reaction is Exonucleolytic cleavage in either 5'- to 3'- or 3'- to 5'-direction to yield nucleoside 5'-phosphates.. In terms of biological role, bidirectionally degrades single-stranded DNA into large acid-insoluble oligonucleotides, which are then degraded further into small acid-soluble oligonucleotides. This chain is Exodeoxyribonuclease 7 large subunit, found in Rhodopirellula baltica (strain DSM 10527 / NCIMB 13988 / SH1).